The chain runs to 614 residues: DNA repair protein rad26 (614 aa).

The span at 29 to 43 (QAQTQVQAQSSQVVV) shows a compositional bias: low complexity. Disordered stretches follow at residues 29 to 76 (QAQT…QASL) and 157 to 214 (KKMK…TAED). Polar residues-rich tracts occupy residues 50 to 76 (QNLNLPNSYTNSSQKVRESTVNSQASL) and 181 to 190 (LLSSSDQLAK). Over residues 191–207 (STKHAAKNSPSKKKRKT) the composition is skewed to basic residues.

Interacts with cds1.

The protein localises to the nucleus. Functionally, involved in cell cycle arrest when DNA synthesis is inhibited by hydroxyurea, and in mitosis arrest after treatment with DNA-damaging agents. This protein is S phase-specific. This is DNA repair protein rad26 (rad26) from Schizosaccharomyces pombe (strain 972 / ATCC 24843) (Fission yeast).